We begin with the raw amino-acid sequence, 522 residues long: Ribonuclease Y (522 aa).

The chain crosses the membrane as a helical span at residues 7-27 (STILYCLFFFFLGIAAVLAFI). A KH domain is found at 212 to 272 (TTSTVGVPTD…VRREVARMSL (61 aa)). The HD domain occupies 338–431 (VLRHSVEVAF…VATADACSAS (94 aa)).

This sequence belongs to the RNase Y family.

Its subcellular location is the cell membrane. Functionally, endoribonuclease that initiates mRNA decay. The polypeptide is Ribonuclease Y (Rhodopirellula baltica (strain DSM 10527 / NCIMB 13988 / SH1)).